The primary structure comprises 133 residues: ATP synthase epsilon chain (133 aa).

The protein belongs to the ATPase epsilon chain family. F-type ATPases have 2 components, CF(1) - the catalytic core - and CF(0) - the membrane proton channel. CF(1) has five subunits: alpha(3), beta(3), gamma(1), delta(1), epsilon(1). CF(0) has three main subunits: a, b and c.

Its subcellular location is the cell membrane. Functionally, produces ATP from ADP in the presence of a proton gradient across the membrane. The protein is ATP synthase epsilon chain of Bacillus cereus (strain ATCC 14579 / DSM 31 / CCUG 7414 / JCM 2152 / NBRC 15305 / NCIMB 9373 / NCTC 2599 / NRRL B-3711).